A 442-amino-acid polypeptide reads, in one-letter code: Cell division protein FtsA (442 aa).

The protein belongs to the FtsA/MreB family. In terms of assembly, self-interacts. Interacts with FtsZ.

It localises to the cell inner membrane. Functionally, cell division protein that is involved in the assembly of the Z ring. May serve as a membrane anchor for the Z ring. The polypeptide is Cell division protein FtsA (Rhizobium meliloti (strain 1021) (Ensifer meliloti)).